A 227-amino-acid chain; its full sequence is Cytochrome c oxidase subunit 2 (227 aa).

Residues 1 to 14 are Mitochondrial intermembrane-facing; that stretch reads MAHPVQLGLQDATS. A helical membrane pass occupies residues 15–45; the sequence is PVMEELITFHDYALMTISLISFLVLYALFST. The Mitochondrial matrix segment spans residues 46-59; that stretch reads LTTKLTNTNITDAQ. The helical transmembrane segment at 60–87 threads the bilayer; the sequence is EMETTWTILPAVILILIALPSLRILYLT. Residues 88–227 lie on the Mitochondrial intermembrane side of the membrane; the sequence is DEINNPSFTI…IFEMGPVFTL (140 aa). Positions 161, 196, 198, 200, 204, and 207 each coordinate Cu cation. A Mg(2+)-binding site is contributed by Glu-198.

It belongs to the cytochrome c oxidase subunit 2 family. Component of the cytochrome c oxidase (complex IV, CIV), a multisubunit enzyme composed of 14 subunits. The complex is composed of a catalytic core of 3 subunits MT-CO1, MT-CO2 and MT-CO3, encoded in the mitochondrial DNA, and 11 supernumerary subunits COX4I, COX5A, COX5B, COX6A, COX6B, COX6C, COX7A, COX7B, COX7C, COX8 and NDUFA4, which are encoded in the nuclear genome. The complex exists as a monomer or a dimer and forms supercomplexes (SCs) in the inner mitochondrial membrane with NADH-ubiquinone oxidoreductase (complex I, CI) and ubiquinol-cytochrome c oxidoreductase (cytochrome b-c1 complex, complex III, CIII), resulting in different assemblies (supercomplex SCI(1)III(2)IV(1) and megacomplex MCI(2)III(2)IV(2)). Found in a complex with TMEM177, COA6, COX18, COX20, SCO1 and SCO2. Interacts with TMEM177 in a COX20-dependent manner. Interacts with COX20. Interacts with COX16. It depends on Cu cation as a cofactor.

The protein localises to the mitochondrion inner membrane. It catalyses the reaction 4 Fe(II)-[cytochrome c] + O2 + 8 H(+)(in) = 4 Fe(III)-[cytochrome c] + 2 H2O + 4 H(+)(out). Component of the cytochrome c oxidase, the last enzyme in the mitochondrial electron transport chain which drives oxidative phosphorylation. The respiratory chain contains 3 multisubunit complexes succinate dehydrogenase (complex II, CII), ubiquinol-cytochrome c oxidoreductase (cytochrome b-c1 complex, complex III, CIII) and cytochrome c oxidase (complex IV, CIV), that cooperate to transfer electrons derived from NADH and succinate to molecular oxygen, creating an electrochemical gradient over the inner membrane that drives transmembrane transport and the ATP synthase. Cytochrome c oxidase is the component of the respiratory chain that catalyzes the reduction of oxygen to water. Electrons originating from reduced cytochrome c in the intermembrane space (IMS) are transferred via the dinuclear copper A center (CU(A)) of subunit 2 and heme A of subunit 1 to the active site in subunit 1, a binuclear center (BNC) formed by heme A3 and copper B (CU(B)). The BNC reduces molecular oxygen to 2 water molecules using 4 electrons from cytochrome c in the IMS and 4 protons from the mitochondrial matrix. The chain is Cytochrome c oxidase subunit 2 (MT-CO2) from Chlorocebus aethiops (Green monkey).